The chain runs to 51 residues: U-Asilidin(1)-Eru1a (51 aa).

A signal peptide spans 1 to 23 (MANYIDVLSFLAIICATVLATLA). 3 disulfide bridges follow: Cys-26–Cys-40, Cys-33–Cys-44, and Cys-39–Cys-49.

The protein belongs to the asilidin-1 family. As to expression, expressed by the venom gland. The most highly expressed peptides U-Asilidin1-Mar1a is around 3000 times higher expressed in the venom thoracic glands compared to its body tissues.

Its subcellular location is the secreted. Functionally, induces neurotoxic effect on honeybees, including slow movements, disorientation and paralysis. Since it provokes similar symptoms than omega-atracotoxin, it is probable that it acts in the same way by inhibiting voltage-gated calcium channels. The sequence is that of U-Asilidin(1)-Eru1a from Eutolmus rufibarbis (Golden-tabbed robberfly).